The sequence spans 257 residues: Short-chain dehydrogenase reductase 3a (257 aa).

12–36 (IITGGASGIGAEAVRLFTDHGAKVV) contacts NAD(+). Position 144 (S144) interacts with substrate. Y157 serves as the catalytic Proton acceptor.

It belongs to the short-chain dehydrogenases/reductases (SDR) family. Highly expressed in the radicle tip, lateral root primordia and tips, and the area surrounding the cotyledon hydathode of young seedlings.

Its function is as follows. Confers resistance to the incompatible pathogenic bacteria P.syringae pv. tomato DC3000 in a PR1-dependent manner. Seems not involved in abscisic acid (ABA) biosynthesis. The sequence is that of Short-chain dehydrogenase reductase 3a (SDR3a) from Arabidopsis thaliana (Mouse-ear cress).